A 363-amino-acid polypeptide reads, in one-letter code: RNA exonuclease NGL1 (363 aa).

Residues 1–23 (MFTRRFIPVVQSTKQNIGKYVRK) constitute a mitochondrion transit peptide.

Belongs to the CCR4/nocturin family.

It is found in the mitochondrion. This Saccharomyces cerevisiae (strain ATCC 204508 / S288c) (Baker's yeast) protein is RNA exonuclease NGL1 (NGL1).